Here is a 464-residue protein sequence, read N- to C-terminus: CRISPR system endoribonuclease Csm6 (464 aa).

The tract at residues 1 to 190 (MEDLDALWER…LRILPNPHEA (190 aa)) is CARF domain. Positions 191–464 (LAEVDALFAK…LSPEPVPLGF (274 aa)) are HEPN domain.

This sequence belongs to the CRISPR-associated Csm6 family. As to quaternary structure, homodimer. The protein forms a twisted, head-to-head dimer; the composite ssRNase active site is formed at the dimer interface. Requires Does not require a metal cofactor. as cofactor.

With respect to regulation, non-specific ssRNase activity is allosterically activated about 1000-fold by cyclic tetraadenylate (cA4), which probably binds to its CARF domain. In terms of biological role, CRISPR (clustered regularly interspaced short palindromic repeat) is an adaptive immune system that provides protection against mobile genetic elements (viruses, transposable elements and conjugative plasmids). CRISPR clusters contain spacers, sequences complementary to antecedent mobile elements, and target invading nucleic acids. CRISPR clusters are transcribed and processed into CRISPR RNA (crRNA). The type III-A Csm effector complex binds crRNA and acts as a crRNA-guided RNase, DNase and cyclic oligoadenylate synthase; binding of target RNA cognate to the crRNA is required for all activities. This protein is not part of the Csm effector complex. Its function is as follows. A single-strand-specific endoribonuclease (ssRNase) producing free 5'-OH. Activity is approximately 1000-fold stimulated by cyclic oligoadenylate (cOA); only cyclic tetraadenylate (cA4) stimulates the ssRNase activity while linear oligoadenylates do not activate the RNase. Another study showed stimulation by linear tetraadenylate at very high concentrations, but did not examine stimulation by cA4. This chain is CRISPR system endoribonuclease Csm6, found in Thermus thermophilus (strain ATCC 27634 / DSM 579 / HB8).